The sequence spans 160 residues: Deoxyuridine 5'-triphosphate nucleotidohydrolase (160 aa).

Residues 72 to 74 (RSG), Asn85, and 89 to 91 (TID) each bind substrate.

This sequence belongs to the dUTPase family. Mg(2+) is required as a cofactor.

The enzyme catalyses dUTP + H2O = dUMP + diphosphate + H(+). Its pathway is pyrimidine metabolism; dUMP biosynthesis; dUMP from dCTP (dUTP route): step 2/2. This enzyme is involved in nucleotide metabolism: it produces dUMP, the immediate precursor of thymidine nucleotides and it decreases the intracellular concentration of dUTP so that uracil cannot be incorporated into DNA. This chain is Deoxyuridine 5'-triphosphate nucleotidohydrolase, found in Methylocella silvestris (strain DSM 15510 / CIP 108128 / LMG 27833 / NCIMB 13906 / BL2).